Consider the following 375-residue polypeptide: MKVWLLLGLLLLHEALGDVAGQHPPKNKRPKEQGENRIKPTNKKAKPKIPKIKDRDTADSAPKSQSIMMQAMDNGRFQKPAATVSLMAGQSVELRCKGSKVEWSYPAYLDTFKDSRLTVKQNERYGQLTLVNSTTADTGEFSCWERLCNGYICRRDEARTGSTYIFFTEKGELFVPSPSYFDVVYLNPDRQAVVPCRVTAPSAKVTLHREFPAKEIPANGTDIVYDMKRGFVYLQPHSDHQGVVYCKAEAGGKSQISVKYQLLYVEVPSGPPSTTILASSNKVRGGDDISVLCTVLGEPDVEVEFRWIFPGQKDERPVTIQDTWRLIHRGLGHTTRISQSVITVEDFETIDAGYYICTAQNLRGQTTVATTVEFS.

An N-terminal signal peptide occupies residues 1-17 (MKVWLLLGLLLLHEALG). Residues 19 to 63 (VAGQHPPKNKRPKEQGENRIKPTNKKAKPKIPKIKDRDTADSAPK) form a disordered region. A compositionally biased stretch (basic residues) spans 40–50 (PTNKKAKPKIP). Residues 62–159 (PKSQSIMMQA…GYICRRDEAR (98 aa)) enclose the Ig-like C2-type 1 domain. A disulfide bond links C96 and C143. The N-linked (GlcNAc...) asparagine glycan is linked to N219. One can recognise an Ig-like C2-type 2 domain in the interval 272-375 (PSTTILASSN…TTVATTVEFS (104 aa)). A disulfide bridge connects residues C293 and C357.

In terms of assembly, forms a complex composed of PDGFRL, TNK2 and GRB2.

The protein localises to the secreted. The sequence is that of Platelet-derived growth factor receptor-like protein (Pdgfrl) from Rattus norvegicus (Rat).